The primary structure comprises 547 residues: Chaperonin GroEL (547 aa).

Residues 30–33 (TLGP), lysine 51, 87–91 (DGTTT), glycine 415, and aspartate 495 contribute to the ATP site.

The protein belongs to the chaperonin (HSP60) family. In terms of assembly, forms a cylinder of 14 subunits composed of two heptameric rings stacked back-to-back. Interacts with the co-chaperonin GroES.

The protein resides in the cytoplasm. The catalysed reaction is ATP + H2O + a folded polypeptide = ADP + phosphate + an unfolded polypeptide.. Its function is as follows. Together with its co-chaperonin GroES, plays an essential role in assisting protein folding. The GroEL-GroES system forms a nano-cage that allows encapsulation of the non-native substrate proteins and provides a physical environment optimized to promote and accelerate protein folding. The polypeptide is Chaperonin GroEL (Pasteurella multocida (strain Pm70)).